Reading from the N-terminus, the 504-residue chain is 2-isopropylmalate synthase (504 aa).

The region spanning 6 to 267 (IIIFDTTLRD…YTGIISKEIY (262 aa)) is the Pyruvate carboxyltransferase domain. Asp-15, His-201, His-203, and Asn-237 together coordinate Mn(2+). Residues 391-504 (EITDLLQSSG…LNSYLRIHKN (114 aa)) form a regulatory domain region.

This sequence belongs to the alpha-IPM synthase/homocitrate synthase family. LeuA type 1 subfamily. As to quaternary structure, homodimer. Mn(2+) serves as cofactor.

It is found in the cytoplasm. The catalysed reaction is 3-methyl-2-oxobutanoate + acetyl-CoA + H2O = (2S)-2-isopropylmalate + CoA + H(+). Its pathway is amino-acid biosynthesis; L-leucine biosynthesis; L-leucine from 3-methyl-2-oxobutanoate: step 1/4. In terms of biological role, catalyzes the condensation of the acetyl group of acetyl-CoA with 3-methyl-2-oxobutanoate (2-ketoisovalerate) to form 3-carboxy-3-hydroxy-4-methylpentanoate (2-isopropylmalate). The polypeptide is 2-isopropylmalate synthase (Campylobacter concisus (strain 13826)).